A 447-amino-acid chain; its full sequence is MEGIKYIASLVFFFVFLEASKTEPVKHSETYCMFQDKKYRVGEKWHPYLEPYGLVYCVNCICSENGNVLCSRVRCPTLHCLSPVHIPHLCCPRCPDSLPPMNSKVTSKSCEYNGTTYQHGELFIAEGLFQNRQPNQCSQCSCSEGNVYCGLKTCPKLTCAFPVSVPDSCCRVCRGDGELSWEHSDADIFRQPANREARHSYLRSPYDPPPSRQAGGLPRFAGSRSHRGAVIDSQQASGTIVQIVINNKHKHGQVCVSNGKTYSHGESWHPNLRAFGIVECVLCTCNVTKQECKKIHCPNRYPCKYPQKLDGKCCKVCPEEPPSQNFDSKGSFCGEETMPVYEAVLVEDGETARKVALETEKPPQVEVHVWTIRKGILQHFHIEKISKEMFGGLHHFKLVTRTTMNQWKIFAEGEAQLSQMCSSRVCRTELEDLVQVLYLERPEKDHC.

The signal sequence occupies residues 1 to 22; it reads MEGIKYIASLVFFFVFLEASKT. 2 consecutive VWFC domains span residues 30 to 95 and 108 to 174; these read TYCM…PRCP and KSCE…RVCR. N113 carries N-linked (GlcNAc...) asparagine glycosylation. The short motif at 174 to 176 is the Cell attachment site element; the sequence is RGD. The interval 199–219 is disordered; it reads HSYLRSPYDPPPSRQAGGLPR. A VWFC 3 domain is found at 253-318; that stretch reads QVCVSNGKTY…LDGKCCKVCP (66 aa). A glycan (N-linked (GlcNAc...) asparagine) is linked at N286.

The protein localises to the secreted. Its function is as follows. Seems to antagonize the function of BMP4 by binding to it and preventing its interaction with receptors. Alters the fate commitment of neural stem cells from gliogenesis to neurogenesis. Contributes to neuronal differentiation of neural stem cells in the brain by preventing the adoption of a glial fate. May play a crucial role in dorsoventral axis formation. May play a role in embryonic bone formation. Plays a role during anterior segment eye development. The polypeptide is Chordin-like protein 1 (Chrdl1) (Rattus norvegicus (Rat)).